The sequence spans 238 residues: tRNA (guanine-N(1)-)-methyltransferase (238 aa).

S-adenosyl-L-methionine is bound by residues glycine 108 and 127-132 (LGDFVL).

The protein belongs to the RNA methyltransferase TrmD family. Homodimer.

It localises to the cytoplasm. The enzyme catalyses guanosine(37) in tRNA + S-adenosyl-L-methionine = N(1)-methylguanosine(37) in tRNA + S-adenosyl-L-homocysteine + H(+). Functionally, specifically methylates guanosine-37 in various tRNAs. In Streptococcus uberis (strain ATCC BAA-854 / 0140J), this protein is tRNA (guanine-N(1)-)-methyltransferase.